The sequence spans 261 residues: HLA class II histocompatibility antigen, DM alpha chain (261 aa).

A signal peptide spans 1–26; the sequence is MGHEQNQGAALLQMLPLLWLLPHSWA. Residues 27–124 are alpha-1; it reads VPEAPTPMWP…KLDGKIPVSR (98 aa). Topologically, residues 27–233 are lumenal; that stretch reads VPEAPTPMWP…PSDLLENVLC (207 aa). N41 is a glycosylation site (N-linked (GlcNAc...) asparagine). Intrachain disulfides connect C50–C105 and C147–C202. The Ig-like C1-type domain maps to 121 to 215; it reads PVSRGFPIAE…HEIDRYTAIA (95 aa). Positions 125-217 are alpha-2; sequence GFPIAEVFTL…IDRYTAIAYW (93 aa). The tract at residues 218–233 is connecting peptide; it reads VPRNALPSDLLENVLC. A helical membrane pass occupies residues 234-254; sequence GVAFGLGVLGIIVGIVLIIYF. At 255–261 the chain is on the cytoplasmic side; sequence RKPCSGD.

This sequence belongs to the MHC class II family. As to quaternary structure, heterodimer of an alpha chain (DMA) and a beta chain (DMB). Interacts with MHCII; this interaction mediates rapid selection of high-affinity peptides in a pH-dependent manner, with an optimum at pH 5.5.

The protein localises to the late endosome membrane. It is found in the lysosome membrane. Functionally, plays a critical role in catalyzing the release of class II-associated invariant chain peptide (CLIP) from newly synthesized MHC class II molecules and freeing the peptide binding site for acquisition of antigenic peptides. In B-cells, the interaction between HLA-DM and MHC class II molecules is regulated by HLA-DO. The chain is HLA class II histocompatibility antigen, DM alpha chain (HLA-DMA) from Homo sapiens (Human).